The following is a 229-amino-acid chain: Protein FAM3C (229 aa).

The signal sequence occupies residues 1–24 (MRIAGAIKFVVAVALFLLTFYVIS). Intrachain disulfides connect cysteine 59–cysteine 87 and cysteine 65–cysteine 222. In terms of domain architecture, GG-type lectin spans 68 to 226 (KHFAFKIASG…VEMEGCIPQK (159 aa)).

Belongs to the FAM3 family. Expressed in the retinal ganglion cell layer.

It localises to the secreted. In terms of biological role, involved in retinal laminar formation. The sequence is that of Protein FAM3C (fam3c) from Xenopus laevis (African clawed frog).